Consider the following 180-residue polypeptide: Adenine phosphoribosyltransferase (180 aa).

The protein belongs to the purine/pyrimidine phosphoribosyltransferase family. As to quaternary structure, homodimer.

It is found in the cytoplasm. It carries out the reaction AMP + diphosphate = 5-phospho-alpha-D-ribose 1-diphosphate + adenine. The protein operates within purine metabolism; AMP biosynthesis via salvage pathway; AMP from adenine: step 1/1. Its function is as follows. Catalyzes a salvage reaction resulting in the formation of AMP, that is energically less costly than de novo synthesis. This chain is Adenine phosphoribosyltransferase, found in Haemophilus influenzae (strain PittEE).